An 858-amino-acid polypeptide reads, in one-letter code: DNA replication licensing factor mcm4-A (858 aa).

Positions 1 to 125 (MSSPTSTPSR…ARKVKQVDLH (125 aa)) are disordered. 2 stretches are compositionally biased toward polar residues: residues 54–68 (SPSGDIQSPLFSSPA) and 79–94 (LDLSSPLTYGTPSSRV). The C4-type zinc-finger motif lies at 301–326 (CQVCAFTTRVEIDRGRIAEPSVCKHC). The region spanning 453 to 662 (IYERLAAALA…YDRRLAHHLV (210 aa)) is the MCM domain. Residues Y466, R492, K511, S512, N613, R638, R727, and E730 each contribute to the ATP site. The Arginine finger motif lies at 637 to 640 (SRFD).

Belongs to the MCM family. In terms of assembly, component of the mcm2-7 complex (RLF-M). The complex forms a toroidal hexameric ring with the proposed subunit order mcm2-mcm6-mcm4-mcm7-mcm3-mcm5. The heterodimer of mmcm3/mcm5 interacts with mcm4, mmcm6, mcm7 and weakly with mcm2. Component of the CMG helicase complex, composed of the mcm2-7 complex, the GINS complex and cdc45. Post-translationally, hyperphosphorylated during mitosis in a mechanism requiring cdc2-cyclin B and other kinases. Undergoes dephosphorylation after exiting mitosis, existing in a partially phosphorylated state in the cytosolic interphase mcm complex which associates with the pre-replication complexes (pre-Rcs). Complete dephosphorylation inactivates the mcm complex, preventing its binding to chromatin. Becomes actively phosphorylated during S phase once the mcm complex is assembled on the chromatin. This chromatin-associated phosphorylation occurs during the activation of the pre-Rcs and is independent of cdks. Phosphorylated by the cdc7-dbf4b complex.

Its subcellular location is the nucleus. The protein localises to the chromosome. It catalyses the reaction ATP + H2O = ADP + phosphate + H(+). In terms of biological role, acts as a component of the MCM2-7 complex (MCM complex) which is the replicative helicase essential for 'once per cell cycle' DNA replication initiation and elongation in eukaryotic cells. Core component of CDC45-MCM-GINS (CMG) helicase, the molecular machine that unwinds template DNA during replication, and around which the replisome is built. The active ATPase sites in the MCM2-7 ring are formed through the interaction surfaces of two neighboring subunits such that a critical structure of a conserved arginine finger motif is provided in trans relative to the ATP-binding site of the Walker A box of the adjacent subunit. The six ATPase active sites, however, are likely to contribute differentially to the complex helicase activity. This Xenopus laevis (African clawed frog) protein is DNA replication licensing factor mcm4-A (mcm4-a).